The primary structure comprises 63 residues: UPF0337 protein PSPTO_1596 (63 aa).

The tract at residues 20–63 is disordered; sequence KQAVGKATDNTKLQAEGKAQELKGEGQQAKGEVKDAVKKGVDKV. Residues 50–63 are compositionally biased toward basic and acidic residues; the sequence is GEVKDAVKKGVDKV.

It belongs to the UPF0337 (CsbD) family.

In Pseudomonas syringae pv. tomato (strain ATCC BAA-871 / DC3000), this protein is UPF0337 protein PSPTO_1596.